Consider the following 207-residue polypeptide: Large ribosomal subunit protein bL17m (207 aa).

Over residues 173–200 (EKESEHARLKEDHEDEKTVKKDWKRGDP) the composition is skewed to basic and acidic residues. Residues 173 to 207 (EKESEHARLKEDHEDEKTVKKDWKRGDPIPRPTYI) are disordered.

Belongs to the bacterial ribosomal protein bL17 family. Component of the mitochondrial large ribosomal subunit (mt-LSU). Mature yeast 74S mitochondrial ribosomes consist of a small (37S) and a large (54S) subunit. The 37S small subunit contains a 15S ribosomal RNA (15S mt-rRNA) and at least 32 different proteins. The 54S large subunit contains a 21S rRNA (21S mt-rRNA) and at least 45 different proteins.

The protein localises to the mitochondrion. Functionally, component of the mitochondrial ribosome (mitoribosome), a dedicated translation machinery responsible for the synthesis of mitochondrial genome-encoded proteins, including at least some of the essential transmembrane subunits of the mitochondrial respiratory chain. The mitoribosomes are attached to the mitochondrial inner membrane and translation products are cotranslationally integrated into the membrane. In Schizosaccharomyces pombe (strain 972 / ATCC 24843) (Fission yeast), this protein is Large ribosomal subunit protein bL17m (mrpl8).